Consider the following 77-residue polypeptide: Conotoxin ArMSGL-0143 (77 aa).

The signal sequence occupies residues 1–22 (MSGLGIMLLTLLLLVFMETSHQ). Positions 23–44 (DAGEKQATQRDAINVRRRRSLT) are excised as a propeptide. 3 disulfide bridges follow: Cys51-Cys63, Cys55-Cys71, and Cys62-Cys75. The residue at position 76 (Phe76) is a Phenylalanine amide.

It belongs to the conotoxin O3 superfamily. In terms of tissue distribution, expressed by the venom duct.

The protein resides in the secreted. The sequence is that of Conotoxin ArMSGL-0143 from Conus arenatus (Sand-dusted cone).